A 1130-amino-acid chain; its full sequence is ABC transporter ATM1 (1130 aa).

A mitochondrion-targeting transit peptide spans 1-65 (MQPPTRAPFF…ESFHSSAFQL (65 aa)). Disordered stretches follow at residues 191–212 (DAWT…CVRP), 276–315 (HHAP…RNMS), and 341–385 (STFS…TSSP). Polar residues-rich tracts occupy residues 195–206 (SGCSGQTDNATA) and 305–315 (GSLTLSPRNMS). Residues 406–426 (PNPTSLQLLFSLFPFLWPTAL) form a helical membrane-spanning segment. Residues 468-502 (PLSPSGASPSSGDTSLLASSGETSSSLSPSAAPAE) show a composition bias toward low complexity. The segment at 468-554 (PLSPSGASPS…AGKAGTSVGG (87 aa)) is disordered. Positions 503–523 (GAREAGKSGESAGRERRDEGS) are enriched in basic and acidic residues. Transmembrane regions (helical) follow at residues 574 to 594 (IVSV…AATG), 653 to 673 (VLLF…YLLG), 678 to 698 (GPVA…TAAV), 761 to 781 (LAFL…GSLA), and 791 to 811 (LLPV…AVPL). Positions 587–823 (VARIAATGFN…VGTIYRETSL (237 aa)) constitute an ABC transmembrane type-1 domain. The 255-residue stretch at 857–1111 (VAFENVRFAY…ERGLYRALWE (255 aa)) folds into the ABC transporter domain. 910-917 (GPSGVGKS) is a binding site for ATP.

This sequence belongs to the ABC transporter superfamily. ABCB family. Heavy Metal importer (TC 3.A.1.210) subfamily. As to quaternary structure, homodimer.

The protein localises to the mitochondrion membrane. In terms of biological role, probably transports iron-sulfur clusters in an ATP-dependent manner. Plays a role in [Fe-S] proteins homeostasis. Required for optimal parasite growth and lytic cycle. This chain is ABC transporter ATM1, found in Toxoplasma gondii (strain ATCC 50611 / Me49).